The sequence spans 470 residues: Serine hydroxymethyltransferase, cytosolic (470 aa).

Residues 1-11 (MSAYALSQSHR) show a composition bias toward polar residues. A disordered region spans residues 1-23 (MSAYALSQSHRQLTEGHLKDTDP). At S2 the chain carries N-acetylserine. A compositionally biased stretch (basic and acidic residues) spans 12–23 (QLTEGHLKDTDP). At K249 the chain carries N6-(pyridoxal phosphate)lysine.

It belongs to the SHMT family. Homotetramer. It depends on pyridoxal 5'-phosphate as a cofactor.

The protein resides in the cytoplasm. It carries out the reaction (6R)-5,10-methylene-5,6,7,8-tetrahydrofolate + glycine + H2O = (6S)-5,6,7,8-tetrahydrofolate + L-serine. It participates in one-carbon metabolism; tetrahydrofolate interconversion. Functionally, interconversion of serine and glycine. This is Serine hydroxymethyltransferase, cytosolic (SHM2) from Candida albicans (strain SC5314 / ATCC MYA-2876) (Yeast).